The chain runs to 360 residues: Chorismate synthase (360 aa).

Position 47 (Arg47) interacts with NADP(+). FMN is bound by residues 124-126, 240-241, Gly285, 300-304, and Arg326; these read RSS, NA, and KPVAT.

Belongs to the chorismate synthase family. Homotetramer. FMNH2 is required as a cofactor.

It carries out the reaction 5-O-(1-carboxyvinyl)-3-phosphoshikimate = chorismate + phosphate. The protein operates within metabolic intermediate biosynthesis; chorismate biosynthesis; chorismate from D-erythrose 4-phosphate and phosphoenolpyruvate: step 7/7. Catalyzes the anti-1,4-elimination of the C-3 phosphate and the C-6 proR hydrogen from 5-enolpyruvylshikimate-3-phosphate (EPSP) to yield chorismate, which is the branch point compound that serves as the starting substrate for the three terminal pathways of aromatic amino acid biosynthesis. This reaction introduces a second double bond into the aromatic ring system. This Cytophaga hutchinsonii (strain ATCC 33406 / DSM 1761 / CIP 103989 / NBRC 15051 / NCIMB 9469 / D465) protein is Chorismate synthase.